The chain runs to 417 residues: mRNA export factor ICP27 homolog (417 aa).

Positions 1 to 28 (MEDIIEGGISSDDDFDSSDSSSDEEESD) are enriched in acidic residues. Residues 1–143 (MEDIIEGGIS…NGPLRNGPPR (143 aa)) form a disordered region. An interaction with RNA region spans residues 64-120 (RQRSPITWEHQSPLSRVYRSPSPMRFGKRPRISSNSTSRSCKTSWADRVREAAAQRR). The short motif at 88–94 (RFGKRPR) is the Nuclear localization signal element. Low complexity predominate over residues 96 to 107 (SSNSTSRSCKTS). Positions 106-120 (TSWADRVREAAAQRR) are interaction with host ALYREF or mouse ALYREF2. Basic and acidic residues predominate over residues 108-117 (WADRVREAAA). Positions 118–127 (QRRPSRPFRK) match the Nuclear localization signal motif. The span at 120-130 (RPSRPFRKPYS) shows a compositional bias: basic residues. Low complexity predominate over residues 132-141 (PRNGPLRNGP). Zn(2+) is bound by residues Cys-295, His-385, Cys-389, and Cys-394. A CHC2-type zinc finger spans residues 295–394 (CLMQTTPQDH…HLNKCPSSTC (100 aa)).

Belongs to the HHV-1 ICP27 protein family. Homodimer. Homodimerization is required for transactivation. Interacts with host ALYREF and with mouse ALYREF2. Associates in a complex with RNA, and host export factors NXF1/TAP and ALYREF or ALYREF2; these interactions allow nuclear export of viral transcripts.

It is found in the host cytoplasm. The protein localises to the host nucleus. Functionally, probably acts as a viral splicing factor that regulates viral RNA splicing. Functions as a multifunctional regulator of the expression of viral lytic genes. Early protein that promotes the accumulation and nuclear export of viral intronless RNA transcripts by interacting with mRNAs and cellular export proteins. This Saimiriine herpesvirus 2 (strain 11) (SaHV-2) protein is mRNA export factor ICP27 homolog (EJRF1).